The primary structure comprises 1249 residues: AMB antimetabolite synthetase AmbB (1249 aa).

An adenylation region spans residues 245–633 (FEAQARRTPQ…LGRLDDQVKF (389 aa)). Positions 716-735 (IDRKALPRPQATGAEPQALP) are disordered. One can recognise a Carrier domain in the interval 734-809 (LPSDPLEQAL…ALLELLRQAA (76 aa)). Residue serine 768 is modified to O-(pantetheine 4'-phosphoryl)serine. The segment at 823–1150 (GLSLAERRLW…CVTQALRQRG (328 aa)) is condensation.

It belongs to the NRP synthetase family. Pantetheine 4'-phosphate is required as a cofactor.

It catalyses the reaction holo-[peptidyl-carrier protein] + L-alanine + ATP = L-alanyl-[peptidyl-carrier protein] + AMP + diphosphate. Involved in the biosynthesis of the antimetabolite L-2-amino-4-methoxy-trans-3-butenoic acid (AMB), a non-proteinogenic amino acid which is toxic for prokaryotes and eukaryotes. Adenylates L-alanine and loads it onto its peptidyl carrier domain via a thioester linkage to the phosphopanthetheine moiety. In addition, loads activated L-Ala in trans onto the second carrier domain of AmbE. Can also activate L-Ser, Gly and D-Ala, albeit to a lower extent. The condensation domain of AmbB probably condenses the activated L-Ala and the L-Glu loaded on AmbE to form a L-Glu-L-Ala dipeptide at the first carrier domain of AmbE. In Pseudomonas aeruginosa (strain ATCC 15692 / DSM 22644 / CIP 104116 / JCM 14847 / LMG 12228 / 1C / PRS 101 / PAO1), this protein is AMB antimetabolite synthetase AmbB.